The sequence spans 232 residues: LexA repressor (232 aa).

Residues 26–46 (FDEMKDALDLRSKSGIHRLIT) constitute a DNA-binding region (H-T-H motif). Active-site for autocatalytic cleavage activity residues include Ser153 and Lys191.

The protein belongs to the peptidase S24 family. In terms of assembly, homodimer.

The catalysed reaction is Hydrolysis of Ala-|-Gly bond in repressor LexA.. Functionally, represses a number of genes involved in the response to DNA damage (SOS response), including recA and lexA. In the presence of single-stranded DNA, RecA interacts with LexA causing an autocatalytic cleavage which disrupts the DNA-binding part of LexA, leading to derepression of the SOS regulon and eventually DNA repair. The protein is LexA repressor of Bradyrhizobium sp. (strain ORS 278).